The primary structure comprises 240 residues: ATP synthase subunit a (240 aa).

Helical transmembrane passes span Trp-41–Ile-61, Phe-92–Ile-112, Ser-121–Phe-141, Phe-152–Phe-172, Val-191–Val-211, and Leu-212–Phe-232.

It belongs to the ATPase A chain family. F-type ATPases have 2 components, CF(1) - the catalytic core - and CF(0) - the membrane proton channel. CF(1) has five subunits: alpha(3), beta(3), gamma(1), delta(1), epsilon(1). CF(0) has three main subunits: a(1), b(2) and c(9-12). The alpha and beta chains form an alternating ring which encloses part of the gamma chain. CF(1) is attached to CF(0) by a central stalk formed by the gamma and epsilon chains, while a peripheral stalk is formed by the delta and b chains.

The protein resides in the cell inner membrane. Key component of the proton channel; it plays a direct role in the translocation of protons across the membrane. This is ATP synthase subunit a from Desulfotalea psychrophila (strain LSv54 / DSM 12343).